The primary structure comprises 477 residues: Methylenetetrahydrofolate--tRNA-(uracil-5-)-methyltransferase TrmFO (477 aa).

15 to 20 (GAGLAG) contacts FAD.

This sequence belongs to the MnmG family. TrmFO subfamily. Requires FAD as cofactor.

It is found in the cytoplasm. It carries out the reaction uridine(54) in tRNA + (6R)-5,10-methylene-5,6,7,8-tetrahydrofolate + NADH + H(+) = 5-methyluridine(54) in tRNA + (6S)-5,6,7,8-tetrahydrofolate + NAD(+). It catalyses the reaction uridine(54) in tRNA + (6R)-5,10-methylene-5,6,7,8-tetrahydrofolate + NADPH + H(+) = 5-methyluridine(54) in tRNA + (6S)-5,6,7,8-tetrahydrofolate + NADP(+). Catalyzes the folate-dependent formation of 5-methyl-uridine at position 54 (M-5-U54) in all tRNAs. The polypeptide is Methylenetetrahydrofolate--tRNA-(uracil-5-)-methyltransferase TrmFO (Nitrobacter hamburgensis (strain DSM 10229 / NCIMB 13809 / X14)).